The primary structure comprises 81 residues: Photosystem I iron-sulfur center (81 aa).

4Fe-4S ferredoxin-type domains are found at residues 2–31 and 39–68; these read AHSV…MVPW and IASA…VRVY. The [4Fe-4S] cluster site is built by Cys-11, Cys-14, Cys-17, Cys-21, Cys-48, Cys-51, Cys-54, and Cys-58.

As to quaternary structure, the eukaryotic PSI reaction center is composed of at least 11 subunits. The cofactor is [4Fe-4S] cluster.

It is found in the plastid. It localises to the chloroplast thylakoid membrane. It carries out the reaction reduced [plastocyanin] + hnu + oxidized [2Fe-2S]-[ferredoxin] = oxidized [plastocyanin] + reduced [2Fe-2S]-[ferredoxin]. Its function is as follows. Apoprotein for the two 4Fe-4S centers FA and FB of photosystem I (PSI); essential for photochemical activity. FB is the terminal electron acceptor of PSI, donating electrons to ferredoxin. The C-terminus interacts with PsaA/B/D and helps assemble the protein into the PSI complex. Required for binding of PsaD and PsaE to PSI. PSI is a plastocyanin-ferredoxin oxidoreductase, converting photonic excitation into a charge separation, which transfers an electron from the donor P700 chlorophyll pair to the spectroscopically characterized acceptors A0, A1, FX, FA and FB in turn. In Gnetum gnemon (Spanish joint-fir), this protein is Photosystem I iron-sulfur center.